We begin with the raw amino-acid sequence, 125 residues long: Small ribosomal subunit protein uS13 (125 aa).

The disordered stretch occupies residues 92–125 (RHRRGLPVRGQRTRTNARTRKGKKKTVGAQAKKK).

This sequence belongs to the universal ribosomal protein uS13 family. In terms of assembly, part of the 30S ribosomal subunit. Forms a loose heterodimer with protein S19. Forms two bridges to the 50S subunit in the 70S ribosome.

Functionally, located at the top of the head of the 30S subunit, it contacts several helices of the 16S rRNA. In the 70S ribosome it contacts the 23S rRNA (bridge B1a) and protein L5 of the 50S subunit (bridge B1b), connecting the 2 subunits; these bridges are implicated in subunit movement. Contacts the tRNAs in the A and P-sites. In Akkermansia muciniphila (strain ATCC BAA-835 / DSM 22959 / JCM 33894 / BCRC 81048 / CCUG 64013 / CIP 107961 / Muc), this protein is Small ribosomal subunit protein uS13.